The sequence spans 310 residues: Vomeronasal type-1 receptor 47 (310 aa).

The Extracellular portion of the chain corresponds to 1–16; it reads MNENSRLHTHSNIRNT. Residues 17-37 traverse the membrane as a helical segment; that stretch reads FFSEIGIGISGNSFLLLFHII. At 38–49 the chain is on the cytoplasmic side; the sequence is KFFRGHRPRLTD. The chain crosses the membrane as a helical span at residues 50 to 70; sequence LPIGLLSLIHLLMLLVAAVIA. The Extracellular segment spans residues 71-91; that stretch reads TDIFISWRGWNDIICKFLVYL. A disulfide bridge links Cys-85 with Cys-172. The chain crosses the membrane as a helical span at residues 92-114; it reads YRSLRGLSLCTTSMLSVLQAIIL. Residues 115–131 lie on the Cytoplasmic side of the membrane; it reads SPRSYCLAKFKRKSSHN. The helical transmembrane segment at 132–152 threads the bilayer; sequence ISCAIIFLSVLYMSISSHLFI. The Extracellular segment spans residues 153–193; that stretch reads SITATLNLTMNNFLYVSQSCSLLPLSYLMQSMYSTLLVLRE. The N-linked (GlcNAc...) asparagine glycan is linked to Asn-159. The chain crosses the membrane as a helical span at residues 194–214; that stretch reads VFLIGLMVLSTSYMVALLCMH. At 215–238 the chain is on the cytoplasmic side; the sequence is RKQAQNLQGTSLSLKTAPEQRATQ. The chain crosses the membrane as a helical span at residues 239-259; that stretch reads TILMLMTFFVLMSIFDSIVSS. Over 260 to 269 the chain is Extracellular; it reads SRAMFLDDST. A helical membrane pass occupies residues 270 to 290; the sequence is CYSIYIFVMHIYATVSPFVFM. Topologically, residues 291 to 310 are cytoplasmic; the sequence is STEKHLVNFFRSMCEWIINM.

This sequence belongs to the G-protein coupled receptor 1 family.

The protein resides in the cell membrane. In terms of biological role, putative pheromone receptor implicated in the regulation of social and reproductive behavior. The sequence is that of Vomeronasal type-1 receptor 47 (Vmn1r47) from Mus musculus (Mouse).